The sequence spans 256 residues: Small ribosomal subunit protein eS1A (256 aa).

Ala-2 is modified (N-acetylalanine; partial).

The protein belongs to the eukaryotic ribosomal protein eS1 family. Component of the small ribosomal subunit. Mature ribosomes consist of a small (40S) and a large (60S) subunit. The 40S subunit contains about 33 different proteins and 1 molecule of RNA (18S). The 60S subunit contains about 49 different proteins and 3 molecules of RNA (25S, 5.8S and 5S).

It localises to the cytoplasm. This Scheffersomyces stipitis (strain ATCC 58785 / CBS 6054 / NBRC 10063 / NRRL Y-11545) (Yeast) protein is Small ribosomal subunit protein eS1A.